We begin with the raw amino-acid sequence, 60 residues long: Large ribosomal subunit protein bL32 (60 aa).

Belongs to the bacterial ribosomal protein bL32 family.

In Borreliella afzelii (strain PKo) (Borrelia afzelii), this protein is Large ribosomal subunit protein bL32.